Reading from the N-terminus, the 116-residue chain is Large ribosomal subunit protein bL20 (116 aa).

Belongs to the bacterial ribosomal protein bL20 family.

In terms of biological role, binds directly to 23S ribosomal RNA and is necessary for the in vitro assembly process of the 50S ribosomal subunit. It is not involved in the protein synthesizing functions of that subunit. The polypeptide is Large ribosomal subunit protein bL20 (Helicobacter pylori (strain G27)).